A 42-amino-acid chain; its full sequence is Delta-actinopoditoxin-Mb1a (42 aa).

4 cysteine pairs are disulfide-bonded: C1-C15, C8-C20, C14-C31, and C16-C42.

The protein belongs to the neurotoxin 06 (delta-actx) family. As to expression, expressed by the venom gland.

The protein resides in the secreted. In terms of biological role, neurotoxin that slows the inactivation of vertebrate tetrodotoxin-sensitive voltage-gated sodium channels (Nav) and most likely insect sodium channels presumably by binding to site 3 of the channel. Effects are an increase in resting tension, a muscle fasciculation and a decrease in indirect twitch tension. It fails to affect tetrodotoxin-resistant sodium currents. In vivo, is lethal to both vertebrates and insects. The chain is Delta-actinopoditoxin-Mb1a from Missulena bradleyi (Eastern mouse spider).